Reading from the N-terminus, the 834-residue chain is MAASAAATAAASAATAASAASGSPGSGEGSAGGEKRPAASSAAAASAAASSPAGGGGEAQELLEHCGVCRERLRPERDPRLLPCLHSACSACLGPATPAAANNSGDGGSAGDGAMVDCPVCKQQCYSKDIVENYFMRDSGSKASSDSQDANQCCTSCEDNAPATSYCVECSEPLCETCVEAHQRVKYTKDHTVRSTGPAKTRDGERTVYCNVHKHEPLVLFCESCDTLTCRDCQLNAHKDHQYQFLEDAVRNQRKLLASLVKRLGDKHATLQKNTKEVRSSIRQVSDVQKRVQVDVKMAILQIMKELNKRGRVLVNDAQKVTEGQQERLERQHWTMTKIQKHQEHILRFASWALESDNNTALLLSKKLIYFQLHRALKMIVDPVEPHGEMKFQWDLNAWTKSAEAFGKIVAERPGTNSTGPGPMAPPRAPGPLSKQGSGSSQPMEVQEGYGFGSDDPYSSAEPHVSGMKRSRSGEGEVSGLLRKVPRVSLERLDLDLTSDSQPPVFKVFPGSTTEDYNLIVIERGAAAAAAGQAGTVPPGAPGAPPLPGMAIVKEEETEAAIGAPPAAPEGPETKPVLMPLTEGPGAEGPRLASPSGSTSSGLEVVAPEVTSAPVSGPGILDDSATICRVCQKPGDLVMCNQCEFCFHLDCHLPALQDVPGEEWSCSLCHVLPDLKEEDGSLSLDGADSTGVVAKLSPANQRKCERVLLALFCHEPCRPLHQLATDSTFSMEQPGGTLDLTLIRARLQEKLSPPYSSPQEFAQDVGRMFKQFNKLTEDKADVQSIIGLQRFFETRMNDAFGDTKFSAVLVEPPPLNLPSAGLSSQELSGPGDGP.

N-acetylalanine is present on Ala2. Residues 13–23 (AATAASAASGS) are compositionally biased toward low complexity. Residues 13 to 56 (AATAASAASGSPGSGEGSAGGEKRPAASSAAAASAAASSPAGGG) are disordered. A phosphoserine mark is found at Ser23, Ser26, and Ser30. A Glycyl lysine isopeptide (Lys-Gly) (interchain with G-Cter in SUMO2) cross-link involves residue Lys35. Over residues 38–52 (AASSAAAASAAASSP) the composition is skewed to low complexity. A Phosphoserine modification is found at Ser51. Residues 66–122 (CGVCRERLRPERDPRLLPCLHSACSACLGPATPAAANNSGDGGSAGDGAMVDCPVCK) form an RING-type zinc finger. Residue Lys128 forms a Glycyl lysine isopeptide (Lys-Gly) (interchain with G-Cter in SUMO2) linkage. Residue Ser139 is modified to Phosphoserine. The segment at 149-196 (DANQCCTSCEDNAPATSYCVECSEPLCETCVEAHQRVKYTKDHTVRST) adopts a B box-type 1 zinc-finger fold. Positions 154, 157, 178, and 182 each coordinate Zn(2+). Residue Lys200 forms a Glycyl lysine isopeptide (Lys-Gly) (interchain with G-Cter in SUMO2) linkage. The B box-type 2 zinc finger occupies 205–246 (ERTVYCNVHKHEPLVLFCESCDTLTCRDCQLNAHKDHQYQFL). Cys210, His213, Cys233, and His238 together coordinate Zn(2+). The tract at residues 247-377 (EDAVRNQRKL…LIYFQLHRAL (131 aa)) is leucine zipper alpha helical coiled-coil region. The tract at residues 248 to 377 (DAVRNQRKLL…LIYFQLHRAL (130 aa)) is interaction with MAGEC2. Glycyl lysine isopeptide (Lys-Gly) (interchain with G-Cter in SUMO2) cross-links involve residues Lys255 and Lys262. The residue at position 267 (Lys267) is an N6-acetyllysine. Lys273 participates in a covalent cross-link: Glycyl lysine isopeptide (Lys-Gly) (interchain with G-Cter in SUMO2). Residue Lys305 is modified to N6-acetyllysine; alternate. Lys305 is covalently cross-linked (Glycyl lysine isopeptide (Lys-Gly) (interchain with G-Cter in SUMO2); alternate). A Glycyl lysine isopeptide (Lys-Gly) (interchain with G-Cter in SUMO2) cross-link involves residue Lys320. Lys341 is modified (N6-acetyllysine). A Glycyl lysine isopeptide (Lys-Gly) (interchain with G-Cter in SUMO2) cross-link involves residue Lys367. The tract at residues 367-371 (KLIYF) is involved in binding PPP1CA. N6-acetyllysine; alternate is present on Lys378. Residue Lys378 forms a Glycyl lysine isopeptide (Lys-Gly) (interchain with G-Cter in SUMO2); alternate linkage. Lys378 participates in a covalent cross-link: Glycyl lysine isopeptide (Lys-Gly) (interchain with G-Cter in SUMO1); alternate. Residue Lys408 forms a Glycyl lysine isopeptide (Lys-Gly) (interchain with G-Cter in SUMO2) linkage. The segment at 412–480 (ERPGTNSTGP…SRSGEGEVSG (69 aa)) is disordered. A Phosphoserine modification is found at Ser418. Lys435 participates in a covalent cross-link: Glycyl lysine isopeptide (Lys-Gly) (interchain with G-Cter in SUMO2). The span at 435-444 (KQGSGSSQPM) shows a compositional bias: polar residues. 3 positions are modified to phosphoserine: Ser438, Ser440, and Ser454. Lys469 is covalently cross-linked (Glycyl lysine isopeptide (Lys-Gly) (interchain with G-Cter in SUMO2); alternate). Lys469 is covalently cross-linked (Glycyl lysine isopeptide (Lys-Gly) (interchain with G-Cter in SUMO1); alternate). Arg470 is subject to Citrulline. Ser471 carries the phosphoserine modification. A Citrulline modification is found at Arg472. A phosphoserine mark is found at Ser473, Ser479, and Ser489. An HP1 box region spans residues 476-513 (GEVSGLLRKVPRVSLERLDLDLTSDSQPPVFKVFPGST). The PxVxL motif signature appears at 481–494 (LLRKVPRVSLERLD). Position 498 is a phosphothreonine (Thr498). Ser501 carries the post-translational modification Phosphoserine. Lys507 is covalently cross-linked (Glycyl lysine isopeptide (Lys-Gly) (interchain with G-Cter in SUMO2)). Residue Lys554 forms a Glycyl lysine isopeptide (Lys-Gly) (interchain with G-Cter in SUMO2); alternate linkage. A Glycyl lysine isopeptide (Lys-Gly) (interchain with G-Cter in SUMO); alternate cross-link involves residue Lys554. Lys575 is covalently cross-linked (Glycyl lysine isopeptide (Lys-Gly) (interchain with G-Cter in SUMO2)). A disordered region spans residues 581 to 602 (LTEGPGAEGPRLASPSGSTSSG). Ser594 is modified (phosphoserine). The segment at 625-672 (ATICRVCQKPGDLVMCNQCEFCFHLDCHLPALQDVPGEEWSCSLCHVL) adopts a PHD-type zinc-finger fold. Lys676 participates in a covalent cross-link: Glycyl lysine isopeptide (Lys-Gly) (interchain with G-Cter in SUMO). 3 positions are modified to phosphoserine: Ser683, Ser689, and Ser697. A Bromo domain is found at 695–799 (KLSPANQRKC…RFFETRMNDA (105 aa)). Lys750 is covalently cross-linked (Glycyl lysine isopeptide (Lys-Gly) (interchain with G-Cter in SUMO2); alternate). A Glycyl lysine isopeptide (Lys-Gly) (interchain with G-Cter in SUMO1); alternate cross-link involves residue Lys750. Residue Lys750 forms a Glycyl lysine isopeptide (Lys-Gly) (interchain with G-Cter in SUMO); alternate linkage. Ser752 bears the Phosphoserine mark. Position 755 is a phosphotyrosine (Tyr755). Ser757 is subject to Phosphoserine. N6-acetyllysine; alternate is present on residues Lys770, Lys774, and Lys779. Residues Lys770, Lys774, and Lys779 each participate in a glycyl lysine isopeptide (Lys-Gly) (interchain with G-Cter in SUMO2); alternate cross-link. Lys779 participates in a covalent cross-link: Glycyl lysine isopeptide (Lys-Gly) (interchain with G-Cter in SUMO1); alternate. Phosphoserine is present on Ser784. Lys804 participates in a covalent cross-link: Glycyl lysine isopeptide (Lys-Gly) (interchain with G-Cter in SUMO2). Ser824 carries the post-translational modification Phosphoserine; by ATM and ATR and dsDNA kinase.

The protein belongs to the TRIM/RBCC family. Oligomer; the RBCC domain homotrimerizes and interacts with one molecule of KRAB to form the KRAB-KAP1 corepressor complex. Interacts with SETX. Binding to a KRAB domain is an absolute requirement for silencing gene expression. Interacts with a number of KRAB-ZFP proteins including ZNF10, ZFP53, ZFP68, ZNF382 and ZNF256. Interacts with NCOR1, NR3C1 and CHD3. Interacts with CEBPB (via the RING-type and PHD-type zinc fingers). Interacts with CBX5 (via the PxVxL motif); the interaction occurs in interphase nuclei and competes for binding POGZ. Interacts with POGZ; the interaction competes for interaction with CBX5. Interacts with SETDB1; the interaction is enhanced by KAP1 sumoylation, stimulates SETDB1 histone methyltransferase activity and gene silencing. Interacts (via the PHD-type zinc finger) with UBE2I; the interaction is required for sumoylation and repressor activity. Component of the TRIM28/KAP1-ERBB4-MDM2 complex involved in connecting growth factor and DNA damage responses. Interacts directly with ERBB4; the interaction represses ERBB4-mediated transcription activity. Interacts with MDM2; the interaction contributes to p53/TP53 inactivation. Component of the TRIM28/KAP1-MDM2-p53/TP53; involved in regulating p53/TP53 stabilization and activity. Interacts (via the leucine zipper alpha helical coiled-coil) with E2F1 (central region); the interaction inhibits E2F1 acetylation and transcriptional activity. Interacts with PPP1CA; the interaction dephosphorylates TRIM28 at Ser-824 and forms a complex at the p21 promoter site. Interacts with PPP1CB; the interaction is weak but is increased on dephosphorylation at Ser-824. Interacts with CEBPB and NR3C1. Interacts with CBX5 (via the PxVxL motif); the interaction occurs in interphase nuclei and competes for binding POGZ. Component of a ternary complex that includes TRIM28, a HP1 protein (CBX1, CBX3 OR CBX5), a KRAB domain-containing protein, and DNA. Interacts with SMARCAD1. Interacts with, and sumoylates IRF7. Interacts with MAGEC2. Part of a complex composed of TRIM28, HDAC1, HDAC2 and EHMT2. Interacts (via the RBCC domain) with KOX1 (via the KRAB domain), ZNF268 (via the KRAB domain) and ZNF300 (via the KRAB domain); the interactions increase KOX1, ZNF268 and ZNF300 nuclear localization activities. Interacts with AICDA. The large PER complex involved in the histone methylation is composed of at least PER2, CBX3, TRIM28, SUV39H1 and/or SUV39H2; CBX3 mediates the formation of the complex. Interacts with NR4A3; the interactions potentiates NR4A3 activity on NurRE promoter. Interacts (unphosphorylated or phosphorylated form) with ZBTB1 (via BTB domain). Probably part of a corepressor complex containing ZNF304, TRIM28, SETDB1 and DNMT1. Interacts with ATRX. Forms a complex with ATRX, SETDB1 and ZNF274. Interacts with ZFP568; the interaction mediates ZFP568 transcriptional repression activity. Interacts with RRP1B. Interacts with CRY1. Interacts with ZNF263; recruited to the SIX3 promoter along with other proteins involved in chromatin modification and transcriptional corepression where it contributes to transcriptional repression. Interacts with CYREN (via XLF motif). Interacts with TRIM17; this interaction prevents TRIM28 activity. Interacts with ZNF746. Interacts with PHF13. Interacts with ZNF354C. Interacts with ZNF432; the interaction is independent of PARP1. In terms of processing, ATM-induced phosphorylation on Ser-824 represses sumoylation leading to the de-repression of expression of a subset of genes involved in cell cycle control and apoptosis in response to genotoxic stress. Dephosphorylation by the phosphatases, PPP1CA and PP1CB forms, allows sumoylation and expression of TRIM28 target genes. Sumoylation/desumoylation events regulate TRIM28-mediated transcriptional repression. Sumoylation is required for interaction with CHD3 and SETDB1 and the corepressor activity. Represses and is repressed by Ser-824 phosphorylation. Enhances the TRIM28 corepressor activity, inhibiting transcriptional activity of a number of genes including GADD45A and CDKN1A/p21. Lys-554, Lys-779 and Lys-804 are the major sites of sumoylation. In response to Dox-induced DNA damage, enhanced phosphorylation on Ser-824 prevents sumoylation and allows de-repression of CDKN1A/p21. Post-translationally, auto-ubiquitinated; enhanced by MAGEA2 and MAGEC2. In terms of processing, citrullinated by PADI4. ADP-ribosylated by SIRT6, promoting TRIM28/KAP1 interaction with CBX5, thereby contributing to the packaging of LINE-1 retrotransposon elements into transcriptionally repressive heterochromatin.

Its subcellular location is the nucleus. It carries out the reaction S-ubiquitinyl-[E2 ubiquitin-conjugating enzyme]-L-cysteine + [acceptor protein]-L-lysine = [E2 ubiquitin-conjugating enzyme]-L-cysteine + N(6)-ubiquitinyl-[acceptor protein]-L-lysine.. It functions in the pathway protein modification; protein sumoylation. Its function is as follows. Nuclear corepressor for KRAB domain-containing zinc finger proteins (KRAB-ZFPs). Mediates gene silencing by recruiting CHD3, a subunit of the nucleosome remodeling and deacetylation (NuRD) complex, and SETDB1 (which specifically methylates histone H3 at 'Lys-9' (H3K9me)) to the promoter regions of KRAB target genes. Enhances transcriptional repression by coordinating the increase in H3K9me, the decrease in histone H3 'Lys-9 and 'Lys-14' acetylation (H3K9ac and H3K14ac, respectively) and the disposition of HP1 proteins to silence gene expression. Recruitment of SETDB1 induces heterochromatinization. May play a role as a coactivator for CEBPB and NR3C1 in the transcriptional activation of ORM1. Also a corepressor for ERBB4. Inhibits E2F1 activity by stimulating E2F1-HDAC1 complex formation and inhibiting E2F1 acetylation. May serve as a partial backup to prevent E2F1-mediated apoptosis in the absence of RB1. Important regulator of CDKN1A/p21(CIP1). Has E3 SUMO-protein ligase activity toward itself via its PHD-type zinc finger. Specifically sumoylates IRF7, thereby inhibiting its transactivation activity. Ubiquitinates p53/TP53 leading to its proteasomal degradation; the function is enhanced by MAGEC2 and MAGEA2, and possibly MAGEA3 and MAGEA6. Mediates the nuclear localization of KOX1, ZNF268 and ZNF300 transcription factors. Probably forms a corepressor complex required for activated KRAS-mediated promoter hypermethylation and transcriptional silencing of tumor suppressor genes (TSGs) or other tumor-related genes in colorectal cancer (CRC) cells. Required to maintain a transcriptionally repressive state of genes in undifferentiated embryonic stem cells (ESCs). In ESCs, in collaboration with SETDB1, is also required for H3K9me3 and silencing of endogenous and introduced retroviruses in a DNA-methylation independent-pathway. Associates at promoter regions of tumor suppressor genes (TSGs) leading to their gene silencing. The SETDB1-TRIM28-ZNF274 complex may play a role in recruiting ATRX to the 3'-exons of zinc-finger coding genes with atypical chromatin signatures to establish or maintain/protect H3K9me3 at these transcriptionally active regions. Acts as a corepressor for ZFP568. This Mus musculus (Mouse) protein is Transcription intermediary factor 1-beta.